The sequence spans 633 residues: DNA mismatch repair protein MutL (633 aa).

Disordered stretches follow at residues 336–364 (VRPDDQLAPPGATSLTEPRPTGAAAGEFG) and 384–405 (GWSGGASSSGASSGYSAYTRPE). Positions 388–401 (GASSSGASSGYSAY) are enriched in low complexity.

Belongs to the DNA mismatch repair MutL/HexB family.

Its function is as follows. This protein is involved in the repair of mismatches in DNA. It is required for dam-dependent methyl-directed DNA mismatch repair. May act as a 'molecular matchmaker', a protein that promotes the formation of a stable complex between two or more DNA-binding proteins in an ATP-dependent manner without itself being part of a final effector complex. The sequence is that of DNA mismatch repair protein MutL from Pseudomonas paraeruginosa (strain DSM 24068 / PA7) (Pseudomonas aeruginosa (strain PA7)).